We begin with the raw amino-acid sequence, 561 residues long: Transmembrane protein 209 (561 aa).

Phosphoserine is present on residues S9 and S11. Residues 28 to 48 (VVLAWGLLNVSMAGMIYTEMT) form a helical membrane-spanning segment. N57 carries N-linked (GlcNAc...) asparagine glycosylation. A helical transmembrane segment spans residues 60–80 (YWPLWYIELALASLFSLNALF). Residue S98 is modified to Phosphoserine. Disordered regions lie at residues 119 to 157 (DLAATQIPPAPPSPSIQGQSVLSYSPSRSPSTSPKFTTS) and 195 to 234 (FSPSPPSPYPTTVGPVESSGLRSRYRSSPTVYNSPTDKED). Residues 133–157 (SIQGQSVLSYSPSRSPSTSPKFTTS) are compositionally biased toward low complexity. Residues S201, S222, and S248 each carry the phosphoserine modification. Over residues 220–229 (RSSPTVYNSP) the composition is skewed to polar residues. Positions 250-271 (EEKQHRVKLGSPDSTSPSSSPT) are disordered. A compositionally biased stretch (low complexity) spans 260–271 (SPDSTSPSSSPT). A glycan (N-linked (GlcNAc...) asparagine) is linked at N274. At S278 the chain carries Phosphoserine.

Interacts with NUP205. In terms of tissue distribution, expressed in the testis.

It localises to the membrane. It is found in the nucleus envelope. The protein localises to the golgi apparatus. Its subcellular location is the cytoplasm. Nuclear envelope protein which in association with NUP205, may be involved in nuclear transport of various nuclear proteins in addition to MYC. This is Transmembrane protein 209 (TMEM209) from Homo sapiens (Human).